Here is a 122-residue protein sequence, read N- to C-terminus: Basic phospholipase A2 10 (122 aa).

7 disulfide bridges follow: C26–C114, C28–C43, C42–C94, C48–C122, C49–C87, C56–C80, and C74–C85. Positions 27, 29, and 31 each coordinate Ca(2+). H46 is an active-site residue. A Ca(2+)-binding site is contributed by D47. D88 is a catalytic residue.

Ca(2+) serves as cofactor. In terms of tissue distribution, expressed by the venom gland.

Its subcellular location is the secreted. The catalysed reaction is a 1,2-diacyl-sn-glycero-3-phosphocholine + H2O = a 1-acyl-sn-glycero-3-phosphocholine + a fatty acid + H(+). With respect to regulation, inhibited by chemical modifications mediated by p-BPB, anhydrous acetic acid and NBSF. Snake venom phospholipase A2 (PLA2) that has a strong dose-dependent anticoagulant effect. In vivo, intramuscular and intervenal injection causes muscle necrosis. Induces moderate edema in the mouse foot pad. PLA2 catalyzes the calcium-dependent hydrolysis of the 2-acyl groups in 3-sn-phosphoglycerides. In Crotalus durissus cumanensis (South American rattlesnake), this protein is Basic phospholipase A2 10.